Here is a 201-residue protein sequence, read N- to C-terminus: Recombination protein RecR (201 aa).

The segment at 57-72 (CQVCYSLSDNDICDIC) adopts a C4-type zinc-finger fold. The 98-residue stretch at 80-177 (NKICIVESYP…RITRITYGIS (98 aa)) folds into the Toprim domain.

This sequence belongs to the RecR family.

In terms of biological role, may play a role in DNA repair. It seems to be involved in an RecBC-independent recombinational process of DNA repair. It may act with RecF and RecO. The protein is Recombination protein RecR of Brachyspira hyodysenteriae (strain ATCC 49526 / WA1).